Consider the following 461-residue polypeptide: Ubiquinone hydroxylase UbiM (461 aa).

The protein belongs to the UbiH/COQ6 family. FAD is required as a cofactor.

The enzyme catalyses a 2-(all-trans-polyprenyl)phenol + NADPH + O2 + H(+) = a 3-(all-trans-polyprenyl)benzene-1,2-diol + NADP(+) + H2O. The catalysed reaction is a 5-methoxy-2-methyl-3-(all-trans-polyprenyl)benzene-1,4-diol + AH2 + O2 = a 3-demethylubiquinol + A + H2O. Its pathway is cofactor biosynthesis; ubiquinone biosynthesis. In terms of biological role, catalyzes the hydroxylation of three positions of the aromatic ring during ubiquinone biosynthesis. This chain is Ubiquinone hydroxylase UbiM, found in Neisseria meningitidis serogroup C / serotype 2a (strain ATCC 700532 / DSM 15464 / FAM18).